The chain runs to 326 residues: Polycomb complex protein BMI-1 (326 aa).

Residues 18 to 57 form an RING-type zinc finger; sequence CVLCGGYFIDATTIIECLHSFCKTCIVRYLETSKYCPICD. Residues 81-95 carry the Nuclear localization signal motif; the sequence is KLVPGLFKNEMKRRR. The tract at residues 162-182 is interaction with PHC2; sequence RYLRCPAAMTVMHLRKFLRSK. The interval 164–228 is interaction with E4F1; sequence LRCPAAMTVM…GPLPLKYRVR (65 aa). The segment at 236–326 is disordered; sequence ISHQRDGLTN…VNGSSATSSG (91 aa). The span at 266-278 shows a compositional bias: low complexity; sequence PSTSSCLPSPSTP. Residues 279–309 are compositionally biased toward polar residues; it reads VQSPHPQFPHISSTMNGTSNSPSGNHQSSFA. Residues 315–326 are compositionally biased toward low complexity; it reads SSVNGSSATSSG.

As to quaternary structure, component of a PRC1-like complex. Identified in a PRC1-like HPRC-H complex with CBX2, CBX4, CBX8, PHC1, PHC2, PHC3 RING1 and RNF2. Interacts with RNF2/RING2. Interacts with RING1. Part of a complex that contains RNF2, UB2D3 and BMI1, where RNF2 and BMI1 form a tight heterodimer, and UB2D3 interacts only with RNF2. The complex composed of RNF2, UB2D3 and BMI1 binds nucleosomes, and has activity only with nucleosomal histone H2A. Interacts with CBX7 and CBX8. Interacts with SPOP. Part of a complex consisting of BMI1, CUL3 and SPOP. Interacts with E4F1. Interacts with PHC2. Interacts with zinc finger protein ZNF277. May be part of a complex including at least ZNF277, BMI1 and RNF2/RING2. Monoubiquitinated. May be polyubiquitinated; which does not lead to proteasomal degradation.

It is found in the nucleus. The protein resides in the cytoplasm. Its function is as follows. Component of a Polycomb group (PcG) multiprotein PRC1-like complex, a complex class required to maintain the transcriptionally repressive state of many genes, including Hox genes, throughout development. PcG PRC1 complex acts via chromatin remodeling and modification of histones; it mediates monoubiquitination of histone H2A 'Lys-119', rendering chromatin heritably changed in its expressibility. The complex composed of RNF2, UB2D3 and BMI1 binds nucleosomes, and has activity only with nucleosomal histone H2A. In the PRC1-like complex, regulates the E3 ubiquitin-protein ligase activity of RNF2/RING2. The protein is Polycomb complex protein BMI-1 (BMI1) of Homo sapiens (Human).